A 156-amino-acid chain; its full sequence is Bacterial microcompartment shell protein PduK (156 aa).

The 86-residue stretch at 4-89 (SLGLLEVSGL…PGDGILSHSV (86 aa)) folds into the BMC domain. The segment at 81-119 (GDGILSHSVTPESESEPAPAPTPVVPHEEIPEDHAAPEA) is disordered. A compositionally biased stretch (basic and acidic residues) spans 106–116 (PHEEIPEDHAA).

It belongs to the bacterial microcompartments protein family. In terms of assembly, interacts with shell protein PduA and assembly protein PduM. Interacts with PduP, probably with its first 18 residues. The cofactor is Fe cation.

Its subcellular location is the bacterial microcompartment. The protein operates within polyol metabolism; 1,2-propanediol degradation. A minor shell protein of the bacterial microcompartment (BMC) dedicated to 1,2-propanediol (1,2-PD) degradation. Its function is as follows. Expression of a cosmid containing the full 21-gene pdu operon in E.coli allows E.coli to grow on 1,2-propanediol (1,2-PD) with the appearance of bacterial microcompartments (BMC) in its cytoplasm. Overexpression of this protein leads to the appearance of a single large aggregate complex in the cytoplasm. Functionally, the 1,2-PD-specific bacterial microcompartment (BMC) concentrates low levels of 1,2-PD catabolic enzymes, concentrates volatile reaction intermediates thus enhancing pathway flux and keeps the level of toxic, mutagenic propionaldehyde low. This Citrobacter freundii protein is Bacterial microcompartment shell protein PduK.